Here is a 613-residue protein sequence, read N- to C-terminus: MAAQAAAAAQAAAAQAAQAEAADSWYLALLGFAEHFRTSSPPKIRLCVHCLQAVFPFKPPQRIEARTHLQLGSVLYHHTKNSEQARSHLEKAWLISQQIPQFEDVKFEAASLLSELYCQENSVDAAKPLLRKAIQISQQTPYWHCRLLFQLAQLHTLEKDLVSACDLLGVGAEYARVVGSEYTRALFLLSKGMLLLMERKLQEVHPLLTLCGQIVENWQGNPIQKESLRVFFLVLQVTHYLDAGQVKSVKPCLKQLQQCIQTISTLHDDEILPSNPADLFHWLPKEHMCVLVYLVTVMHSMQAGYLEKAQKYTDKALMQLEKLKMLDCSPILSSFQVILLEHIIMCRLVTGHKATALQEISQVCQLCQQSPRLFSNHAAQLHTLLGLYCVSVNCMDNAEAQFTTALRLTNHQELWAFIVTNLASVYIREGNRHQEVLYSLLERINPDHSFPVSSHCLRAAAFYVRGLFSFFQGRYNEAKRFLRETLKMSNAEDLNRLTACSLVLLGHIFYVLGNHRESNNMVVPAMQLASKIPDMSVQLWSSALLRDLNKACGNAMDAHEAAQMHQNFSQQLLQDHIEACSLPEHNLITWTDGPPPVQFQAQNGPNTSLASLL.

The segment at 1-115 (MAAQAAAAAQ…KFEAASLLSE (115 aa)) is sufficient for interaction with NIPBL. TPR repeat units follow at residues 107–140 (FEAASLLSELYCQENSVDAAKPLLRKAIQISQQT), 379–412 (AQLHTLLGLYCVSVNCMDNAEAQFTTALRLTNHQ), 459–492 (AAAFYVRGLFSFFQGRYNEAKRFLRETLKMSNAE), and 499–532 (ACSLVLLGHIFYVLGNHRESNNMVVPAMQLASKI).

The protein belongs to the SCC4/mau-2 family. As to quaternary structure, heterodimerizes with MAU2/SCC2 to form the cohesin loading complex. The NIPBL-MAU2 heterodimer interacts with the SMC1A-SMC3 heterodimer and with the cohesin complex composed of SMC1A, SMC3, RAD21 and STAG1.

Its subcellular location is the nucleus. It is found in the nucleoplasm. The protein localises to the chromosome. In terms of biological role, plays an important role in the loading of the cohesin complex on to DNA. Forms a heterodimeric complex (also known as cohesin loading complex) with NIPBL/SCC2 which mediates the loading of the cohesin complex onto chromatin. Plays a role in sister chromatid cohesion and normal progression through prometaphase. The protein is MAU2 chromatid cohesion factor homolog (MAU2) of Homo sapiens (Human).